We begin with the raw amino-acid sequence, 207 residues long: ATP-dependent Clp protease proteolytic subunit (207 aa).

S111 serves as the catalytic Nucleophile. Residue H136 is part of the active site.

The protein belongs to the peptidase S14 family. As to quaternary structure, fourteen ClpP subunits assemble into 2 heptameric rings which stack back to back to give a disk-like structure with a central cavity, resembling the structure of eukaryotic proteasomes.

It localises to the cytoplasm. It catalyses the reaction Hydrolysis of proteins to small peptides in the presence of ATP and magnesium. alpha-casein is the usual test substrate. In the absence of ATP, only oligopeptides shorter than five residues are hydrolyzed (such as succinyl-Leu-Tyr-|-NHMec, and Leu-Tyr-Leu-|-Tyr-Trp, in which cleavage of the -Tyr-|-Leu- and -Tyr-|-Trp bonds also occurs).. In terms of biological role, cleaves peptides in various proteins in a process that requires ATP hydrolysis. Has a chymotrypsin-like activity. Plays a major role in the degradation of misfolded proteins. This Proteus mirabilis (strain HI4320) protein is ATP-dependent Clp protease proteolytic subunit.